Reading from the N-terminus, the 221-residue chain is PKHD-type hydroxylase A9601_13531 (221 aa).

Residues leucine 80 to serine 174 form the Fe2OG dioxygenase domain. Residues histidine 98, aspartate 100, and histidine 155 each coordinate Fe cation. Arginine 165 is a binding site for 2-oxoglutarate.

Fe(2+) is required as a cofactor. It depends on L-ascorbate as a cofactor.

This chain is PKHD-type hydroxylase A9601_13531, found in Prochlorococcus marinus (strain AS9601).